A 201-amino-acid polypeptide reads, in one-letter code: 3-isopropylmalate dehydratase small subunit (201 aa).

This sequence belongs to the LeuD family. LeuD type 1 subfamily. As to quaternary structure, heterodimer of LeuC and LeuD.

The enzyme catalyses (2R,3S)-3-isopropylmalate = (2S)-2-isopropylmalate. It participates in amino-acid biosynthesis; L-leucine biosynthesis; L-leucine from 3-methyl-2-oxobutanoate: step 2/4. Its function is as follows. Catalyzes the isomerization between 2-isopropylmalate and 3-isopropylmalate, via the formation of 2-isopropylmaleate. This is 3-isopropylmalate dehydratase small subunit from Shewanella piezotolerans (strain WP3 / JCM 13877).